Here is a 748-residue protein sequence, read N- to C-terminus: Phosphoenolpyruvate-dependent phosphotransferase system (748 aa).

Residues 1 to 127 (MLTRLREIVE…RRQLLGVLVV (127 aa)) form the GAF domain. Positions 128–170 (QQRELRQYDESEESFLVTLATQMAAILSQSQLTALFGQYRQTR) are linker. Residues 171 to 748 (IRALPAAPGV…GMGGLIRGGL (578 aa)) form a PTS EI region. His-356 (tele-phosphohistidine intermediate) is an active-site residue. Residues Arg-462 and Arg-498 each contribute to the phosphoenolpyruvate site. Positions 597 and 621 each coordinate Mg(2+). Phosphoenolpyruvate is bound by residues 620 to 621 (ND) and Arg-631. The active-site Proton donor is the Cys-668.

This sequence belongs to the PEP-utilizing enzyme family. Requires Mg(2+) as cofactor.

It is found in the cytoplasm. The enzyme catalyses L-histidyl-[protein] + phosphoenolpyruvate = N(pros)-phospho-L-histidyl-[protein] + pyruvate. Inhibited by GDP and FAD. Its function is as follows. Component of the phosphoenolpyruvate-dependent nitrogen-metabolic phosphotransferase system (nitrogen-metabolic PTS), that seems to be involved in regulating nitrogen metabolism. Enzyme I-Ntr transfers the phosphoryl group from phosphoenolpyruvate (PEP) to the phosphoryl carrier protein (NPr). Could function in the transcriptional regulation of sigma-54 dependent operons in conjunction with the NPr (PtsO) and EIIA-Ntr (PtsN) proteins. Enzyme I-Ntr is specific for NPr. This Escherichia coli (strain K12) protein is Phosphoenolpyruvate-dependent phosphotransferase system (ptsP).